The sequence spans 157 residues: Small ribosomal subunit protein uS7 (157 aa).

The protein belongs to the universal ribosomal protein uS7 family. In terms of assembly, part of the 30S ribosomal subunit. Contacts proteins S9 and S11.

In terms of biological role, one of the primary rRNA binding proteins, it binds directly to 16S rRNA where it nucleates assembly of the head domain of the 30S subunit. Is located at the subunit interface close to the decoding center, probably blocks exit of the E-site tRNA. The sequence is that of Small ribosomal subunit protein uS7 from Leptospira borgpetersenii serovar Hardjo-bovis (strain JB197).